A 232-amino-acid polypeptide reads, in one-letter code: Phosphoglycolate phosphatase (232 aa).

Catalysis depends on D8, which acts as the Nucleophile. Residues D8 and D10 each contribute to the Mg(2+) site. Residue K156 coordinates substrate. Positions 179 and 183 each coordinate Mg(2+).

The protein belongs to the archaeal SPP-like hydrolase family. The cofactor is Mg(2+).

The enzyme catalyses 2-phosphoglycolate + H2O = glycolate + phosphate. In terms of biological role, catalyzes the dephosphorylation of 2-phosphoglycolate. The chain is Phosphoglycolate phosphatase from Methanopyrus kandleri (strain AV19 / DSM 6324 / JCM 9639 / NBRC 100938).